The chain runs to 90 residues: RNA-binding protein Hfq (90 aa).

In terms of domain architecture, Sm spans 9–68; that stretch reads EPFLNTLRKEKVPVSIYLVNGIKLQGQIESFDQFVVLLRNNVNQMVYKHAISTIVPARRV.

It belongs to the Hfq family. In terms of assembly, homohexamer.

Its function is as follows. RNA chaperone that binds small regulatory RNA (sRNAs) and mRNAs to facilitate mRNA translational regulation in response to envelope stress, environmental stress and changes in metabolite concentrations. Also binds with high specificity to tRNAs. This Halorhodospira halophila (strain DSM 244 / SL1) (Ectothiorhodospira halophila (strain DSM 244 / SL1)) protein is RNA-binding protein Hfq.